The following is a 231-amino-acid chain: Augmin complex subunit dgt2 (231 aa).

The stretch at 128–199 (QEADLSCDQK…VQTKAELLRG (72 aa)) forms a coiled coil.

In terms of assembly, component of the augmin complex composed of dgt2, dgt3, dgt4, dgt5, dgt6, msd1, msd5 and wac. The complex interacts directly or indirectly with microtubules and is required for centrosome-independent generation of spindle microtubules. dgt2 interacts directly with wac (via coiled coil). In terms of tissue distribution, in adult females, detected only in the abdomen with no expression in the head or thorax (at protein level).

It localises to the cytoplasm. The protein localises to the cytoskeleton. The protein resides in the spindle. It is found in the spindle pole. Functionally, as part of the augmin complex, plays a role in centrosome-independent generation of spindle microtubules. The complex is required for mitotic spindle assembly through its involvement in localizing gamma-tubulin to spindle microtubules. dgt2 binds to microtubules in vitro. The polypeptide is Augmin complex subunit dgt2 (Drosophila melanogaster (Fruit fly)).